Consider the following 700-residue polypeptide: non-specific serine/threonine protein kinase Cdc7 (700 aa).

In terms of domain architecture, Protein kinase spans 127-644 (FDVHSRIGNG…AEEALKHPFF (518 aa)). Residues 133–141 (IGNGTFSTV) and Lys-163 each bind ATP. Asp-250 functions as the Proton acceptor in the catalytic mechanism.

The protein belongs to the protein kinase superfamily. Ser/Thr protein kinase family. As to quaternary structure, component of the Dbf4-dependent kinase (DDK) complex consisting of Cdc7 and the Dbf4 ortholog chif. Interacts with chif (via the processed polypeptide Chiffon-A); the interaction is direct.

The enzyme catalyses L-seryl-[protein] + ATP = O-phospho-L-seryl-[protein] + ADP + H(+). It catalyses the reaction L-threonyl-[protein] + ATP = O-phospho-L-threonyl-[protein] + ADP + H(+). With respect to regulation, activated by chif. Inhibited by the synthetic compound XL413. In terms of biological role, catalytic component of the Dbf4-dependent kinase (DDK) complex. Phosphorylates components of the pre-replication complex, including Mcm2 and, to a lesser extent, Mcm4. Phosphorylates histones, including H3 and H2B. Required for DNA replication and mitotic proliferation, including during the endoreplication and amplification stages of DNA replication in egg chamber follicle cells of the ovary. This chain is non-specific serine/threonine protein kinase Cdc7, found in Drosophila melanogaster (Fruit fly).